We begin with the raw amino-acid sequence, 148 residues long: MTIIPKRSYNVLTTCKAVFRDVGDYWLTTGNLRTTKPQSPAQGFHRDTLLYPVLQYQPATSPSLIVTLLVSMTDATVANGATRVILSSQNGRLLNTIGGPGRASRAKRWGHAGNPSAAAARWWEAYESGTEYKTNATNFLHKMLASCS.

Residues His-45 and Asp-47 each contribute to the Fe cation site.

It belongs to the PhyH family. As to quaternary structure, homodimer. Requires Fe cation as cofactor.

It participates in secondary metabolite biosynthesis; terpenoid biosynthesis. Its function is as follows. Iron/alpha-ketoglutarate-dependent dioxygenase; part of the gene cluster B that mediates the biosynthesis of austinol and dehydroaustinol, two fungal meroterpenoids. The first step of the pathway is the synthesis of 3,5-dimethylorsellinic acid by the polyketide synthase ausA. 3,5-dimethylorsellinic acid is then prenylated by the polyprenyl transferase ausN. Further epoxidation by the FAD-dependent monooxygenase ausM and cyclization by the probable terpene cyclase ausL lead to the formation of protoaustinoid A. Protoaustinoid A is then oxidized to spiro-lactone preaustinoid A3 by the combined action of the FAD-binding monooxygenases ausB and ausC, and the dioxygenase ausE. Acid-catalyzed keto-rearrangement and ring contraction of the tetraketide portion of preaustinoid A3 by ausJ lead to the formation of preaustinoid A4. The aldo-keto reductase ausK, with the help of ausH, is involved in the next step by transforming preaustinoid A4 into isoaustinone which is in turn hydroxylated by the P450 monooxygenase ausI to form austinolide. Finally, the cytochrome P450 monooxygenase ausG modifies austinolide to austinol. Austinol can be further modified to dehydroaustinol which forms a diffusible complex with diorcinol that initiates conidiation. Due to genetic rearrangements of the clusters and the subsequent loss of some enzymes, the end products of the Emericella nidulans austinoid biosynthesis clusters are austinol and dehydroaustinol, even if additional enzymes, such as the O-acetyltransferase ausQ and the cytochrome P450 monooxygenase ausR are still functional. This is Iron/alpha-ketoglutarate-dependent dioxygenase ausU from Emericella nidulans (strain FGSC A4 / ATCC 38163 / CBS 112.46 / NRRL 194 / M139) (Aspergillus nidulans).